The primary structure comprises 278 residues: Replication protein A 32 kDa subunit B (278 aa).

Residues 70 to 143 (VVIVGRISRM…RSVNVFSVRP (74 aa)) constitute a DNA-binding region (OB).

This sequence belongs to the replication factor A protein 2 family. In terms of assembly, heterotrimer of RPA1, RPA2 and RPA3 (canonical replication protein A complex). In terms of processing, phosphorylated in a cell-cycle-dependent manner (from the S phase until mitosis). In response to DNA damage, recruited to DNA-repair nuclear foci, as a hypophosphorylated form.

The protein resides in the nucleus. In terms of biological role, component of the replication protein A complex (RPA) required for DNA recombination, repair and replication. The activity of RPA is mediated by single-stranded DNA binding and protein interactions. Required fo cell division in meristems. Involved in the maintenance of transcriptional epigenetic gene silencing (TGS) at specific loci (including some transposons) by regulating histone H3 acetylation, 'Lys-4' and 'Lys-9' methylation. The sequence is that of Replication protein A 32 kDa subunit B (RPA2B) from Arabidopsis thaliana (Mouse-ear cress).